Here is a 195-residue protein sequence, read N- to C-terminus: GTP cyclohydrolase-2 (195 aa).

48–52 is a binding site for GTP; that stretch reads RIHSE. C53, C64, and C66 together coordinate Zn(2+). GTP-binding positions include Q69, 90–92, and T112; that span reads EGR. The Proton acceptor role is filled by D124. Catalysis depends on R126, which acts as the Nucleophile. GTP-binding residues include T147 and K152.

Belongs to the GTP cyclohydrolase II family. The cofactor is Zn(2+).

The catalysed reaction is GTP + 4 H2O = 2,5-diamino-6-hydroxy-4-(5-phosphoribosylamino)-pyrimidine + formate + 2 phosphate + 3 H(+). It participates in cofactor biosynthesis; riboflavin biosynthesis; 5-amino-6-(D-ribitylamino)uracil from GTP: step 1/4. Functionally, catalyzes the conversion of GTP to 2,5-diamino-6-ribosylamino-4(3H)-pyrimidinone 5'-phosphate (DARP), formate and pyrophosphate. In Campylobacter fetus subsp. fetus (strain 82-40), this protein is GTP cyclohydrolase-2.